The chain runs to 78 residues: Beta-defensin 12 (78 aa).

The N-terminal stretch at 1 to 27 is a signal peptide; it reads MALSREVFYFGFALFFIVVELPSGSWA. Intrachain disulfides connect Cys46–Cys73, Cys53–Cys67, and Cys57–Cys74.

It belongs to the beta-defensin family. As to expression, only expressed in epididymis (caput, corpus and cauda).

It is found in the secreted. Has antibacterial activity. The polypeptide is Beta-defensin 12 (Defb12) (Mus musculus (Mouse)).